A 254-amino-acid chain; its full sequence is Tubulin-specific chaperone B (254 aa).

Positions 182–225 constitute a CAP-Gly domain; sequence PLPLDVMGTWCGVEFPEAAGKNDGRINGVTLFGPVAPGHGSFVR. Residues 234 to 254 form a disordered region; sequence KDEESAEVEDVHDDVESDDEI. Residues 237–254 are compositionally biased toward acidic residues; that stretch reads ESAEVEDVHDDVESDDEI.

The protein belongs to the TBCB family. Binds to monomeric alpha-tubulin.

The protein resides in the cytoplasm. The protein localises to the cytoskeleton. Acts to sequester alpha-tubulin from interaction with beta-tubulin, raising the possibility that it plays a regulatory role in the formation of the tubulin heterodimer. The chain is Tubulin-specific chaperone B (ALF1) from Saccharomyces cerevisiae (strain ATCC 204508 / S288c) (Baker's yeast).